The sequence spans 847 residues: Follistatin-related protein 5 (847 aa).

The signal sequence occupies residues 1–20; that stretch reads MFKCWSVVLVLGFIFLESEG. The region spanning 83-135 is the Kazal-like domain; the sequence is GQAECACMDLCKRHYKPVCGSDGEFYENHCEVHRAACLKKQKITIVHNEDCFF. Intrachain disulfides connect Cys-89-Cys-119, Cys-93-Cys-112, and Cys-101-Cys-133. EF-hand domains lie at 175–210 and 211–246; these read RKKLLVDQMFKYFDADSNGLVDINELTQVIKQEELG and KDLFDCTLYVLLKYDDFNADKHLALEEFYRAFQVIQ. Positions 188, 190, 192, 199, 226, 228, 230, 232, and 237 each coordinate Ca(2+). 2 consecutive Ig-like domains span residues 250-337 and 341-426; these read PEDQ…IFQV and PVIR…EDIS. 2 cysteine pairs are disulfide-bonded: Cys-270/Cys-321 and Cys-362/Cys-413. Residues Asn-318 and Asn-394 are each glycosylated (N-linked (GlcNAc...) asparagine).

The protein resides in the secreted. In Homo sapiens (Human), this protein is Follistatin-related protein 5 (FSTL5).